A 147-amino-acid chain; its full sequence is D-aminoacyl-tRNA deacylase (147 aa).

The Gly-cisPro motif, important for rejection of L-amino acids signature appears at 136-137 (GP).

It belongs to the DTD family. Homodimer.

The protein resides in the cytoplasm. The catalysed reaction is glycyl-tRNA(Ala) + H2O = tRNA(Ala) + glycine + H(+). It catalyses the reaction a D-aminoacyl-tRNA + H2O = a tRNA + a D-alpha-amino acid + H(+). In terms of biological role, an aminoacyl-tRNA editing enzyme that deacylates mischarged D-aminoacyl-tRNAs. Also deacylates mischarged glycyl-tRNA(Ala), protecting cells against glycine mischarging by AlaRS. Acts via tRNA-based rather than protein-based catalysis; rejects L-amino acids rather than detecting D-amino acids in the active site. By recycling D-aminoacyl-tRNA to D-amino acids and free tRNA molecules, this enzyme counteracts the toxicity associated with the formation of D-aminoacyl-tRNA entities in vivo and helps enforce protein L-homochirality. This is D-aminoacyl-tRNA deacylase from Streptococcus pneumoniae (strain Taiwan19F-14).